A 318-amino-acid polypeptide reads, in one-letter code: MAVFPIINLENINDDGRAKILEQIEDACQNWGFFELVNHGIPHEFLDMVEKMTRDHYKKCMEERFKETVLSKGLEAAQAEVNDMDWESTFFLRHLPESNISQMSDLDEEYKKIMKEFAKKLENLAEELLDLLCENLGLEKGYLKKAFYGSKGPTFGTKVSNYPPCPKPDLIKGLRAHTDAGGIILLFQDDKVSGLQLLKDGNWIDVPPMRHAIVVNLGDQLEVITNGRYKSVMHRVLTQTSGTGRMSIASFYNPGSDAVIYPAPALVEKDQDEEKKEVYPKFVFEDYMKLYLGVKFQAKEPRFEAMKANANLGPMATA.

The Fe2OG dioxygenase domain maps to 153–254 (PTFGTKVSNY…RMSIASFYNP (102 aa)). The Fe cation site is built by histidine 177, aspartate 179, and histidine 234.

Belongs to the iron/ascorbate-dependent oxidoreductase family. Requires Fe cation as cofactor. In terms of tissue distribution, fruit.

The catalysed reaction is 1-aminocyclopropane-1-carboxylate + L-ascorbate + O2 = ethene + L-dehydroascorbate + hydrogen cyanide + CO2 + 2 H2O. Its pathway is alkene biosynthesis; ethylene biosynthesis via S-adenosyl-L-methionine; ethylene from S-adenosyl-L-methionine: step 2/2. The polypeptide is 1-aminocyclopropane-1-carboxylate oxidase 1 (ACO1) (Cucumis melo (Muskmelon)).